The following is a 217-amino-acid chain: 3,4-dihydroxy-2-butanone 4-phosphate synthase (217 aa).

D-ribulose 5-phosphate-binding positions include 37-38, aspartate 42, 150-154, and glutamate 174; these read RE and RGGHT. Glutamate 38 is a binding site for Mg(2+). A Mg(2+)-binding site is contributed by histidine 153.

This sequence belongs to the DHBP synthase family. As to quaternary structure, homodimer. Requires Mg(2+) as cofactor. Mn(2+) serves as cofactor.

The catalysed reaction is D-ribulose 5-phosphate = (2S)-2-hydroxy-3-oxobutyl phosphate + formate + H(+). Its pathway is cofactor biosynthesis; riboflavin biosynthesis; 2-hydroxy-3-oxobutyl phosphate from D-ribulose 5-phosphate: step 1/1. Its function is as follows. Catalyzes the conversion of D-ribulose 5-phosphate to formate and 3,4-dihydroxy-2-butanone 4-phosphate. In Proteus mirabilis (strain HI4320), this protein is 3,4-dihydroxy-2-butanone 4-phosphate synthase.